The following is a 454-amino-acid chain: Bifunctional protein GlmU (454 aa).

Residues 1 to 232 (MTDRTCLSIV…VDNVIGINNR (232 aa)) form a pyrophosphorylase region. Residues 11–14 (LAAG), Lys25, Gln78, and 83–84 (GT) contribute to the UDP-N-acetyl-alpha-D-glucosamine site. Residue Asp108 coordinates Mg(2+). The UDP-N-acetyl-alpha-D-glucosamine site is built by Gly144, Glu158, Asn173, and Asn230. Asn230 lines the Mg(2+) pocket. The tract at residues 233 to 253 (AELAEAETIWQNRKRRELMLS) is linker. The tract at residues 254–454 (GVTLIAPETV…AIKAAKSVSK (201 aa)) is N-acetyltransferase. 2 residues coordinate UDP-N-acetyl-alpha-D-glucosamine: Arg319 and Lys337. The Proton acceptor role is filled by His349. UDP-N-acetyl-alpha-D-glucosamine contacts are provided by Tyr352 and Asn363. Acetyl-CoA contacts are provided by residues Ala366, 372-373 (NY), Ser391, Ser409, and Arg426.

This sequence in the N-terminal section; belongs to the N-acetylglucosamine-1-phosphate uridyltransferase family. In the C-terminal section; belongs to the transferase hexapeptide repeat family. In terms of assembly, homotrimer. Mg(2+) is required as a cofactor.

It localises to the cytoplasm. The enzyme catalyses alpha-D-glucosamine 1-phosphate + acetyl-CoA = N-acetyl-alpha-D-glucosamine 1-phosphate + CoA + H(+). It carries out the reaction N-acetyl-alpha-D-glucosamine 1-phosphate + UTP + H(+) = UDP-N-acetyl-alpha-D-glucosamine + diphosphate. It participates in nucleotide-sugar biosynthesis; UDP-N-acetyl-alpha-D-glucosamine biosynthesis; N-acetyl-alpha-D-glucosamine 1-phosphate from alpha-D-glucosamine 6-phosphate (route II): step 2/2. The protein operates within nucleotide-sugar biosynthesis; UDP-N-acetyl-alpha-D-glucosamine biosynthesis; UDP-N-acetyl-alpha-D-glucosamine from N-acetyl-alpha-D-glucosamine 1-phosphate: step 1/1. It functions in the pathway bacterial outer membrane biogenesis; LPS lipid A biosynthesis. In terms of biological role, catalyzes the last two sequential reactions in the de novo biosynthetic pathway for UDP-N-acetylglucosamine (UDP-GlcNAc). The C-terminal domain catalyzes the transfer of acetyl group from acetyl coenzyme A to glucosamine-1-phosphate (GlcN-1-P) to produce N-acetylglucosamine-1-phosphate (GlcNAc-1-P), which is converted into UDP-GlcNAc by the transfer of uridine 5-monophosphate (from uridine 5-triphosphate), a reaction catalyzed by the N-terminal domain. This chain is Bifunctional protein GlmU, found in Brucella abortus (strain S19).